Reading from the N-terminus, the 286-residue chain is MAMEGYWRFLALLGSALLVGFLSVIFALVWVLHYREGLGWDGSALEFNWHPVLMVTGFVFIQGIAIIVYRLPWTWKCSKLLMKSIHAGLNAVAAILAIISVVAVFENHNVNNIANMYSLHSWVGLIAVICYLLQLLSGFSVFLLPWAPLSLRAFLMPIHVYSGIVIFGTVIATALMGLTEKLIFSLRDPAYSTFPPEGVFVNTLGLLILVFGALIFWIVTRPQWKRPKEPNSTILHPNGGTEQGARGSMPAYSGNNMDKSDSELNSEVAARKRNLALDEAGQRSTM.

Residues 1 to 7 lie on the Cytoplasmic side of the membrane; that stretch reads MAMEGYW. Residues 8–32 traverse the membrane as a helical segment; it reads RFLALLGSALLVGFLSVIFALVWVL. In terms of domain architecture, Cytochrome b561 spans 15 to 220; the sequence is SALLVGFLSV…FGALIFWIVT (206 aa). At 33 to 47 the chain is on the extracellular side; that stretch reads HYREGLGWDGSALEF. Residues 48-69 traverse the membrane as a helical segment; that stretch reads NWHPVLMVTGFVFIQGIAIIVY. Heme b-binding residues include His-50, Arg-70, and Lys-79. At 70 to 78 the chain is on the cytoplasmic side; the sequence is RLPWTWKCS. Lys-79 and Lys-83 together coordinate L-ascorbate. The helical transmembrane segment at 79–105 threads the bilayer; it reads KLLMKSIHAGLNAVAAILAIISVVAVF. His-86 is a heme b binding site. Residues 106–118 lie on the Extracellular side of the membrane; the sequence is ENHNVNNIANMYS. His-108 contacts Fe(3+). Heme b contacts are provided by residues 115 to 118 and His-120; that span reads NMYS. A helical membrane pass occupies residues 119–144; sequence LHSWVGLIAVICYLLQLLSGFSVFLL. The Cytoplasmic segment spans residues 145–151; sequence PWAPLSL. Arg-152 lines the L-ascorbate pocket. Residues 152–179 traverse the membrane as a helical segment; the sequence is RAFLMPIHVYSGIVIFGTVIATALMGLT. Residues His-159 and Glu-180 each contribute to the heme b site. The Extracellular portion of the chain corresponds to 180–197; it reads EKLIFSLRDPAYSTFPPE. Residues 198-222 traverse the membrane as a helical segment; sequence GVFVNTLGLLILVFGALIFWIVTRP. Over 223 to 286 the chain is Cytoplasmic; sequence QWKRPKEPNS…LDEAGQRSTM (64 aa). Lys-225 is a binding site for heme b. The interval 229–268 is disordered; that stretch reads EPNSTILHPNGGTEQGARGSMPAYSGNNMDKSDSELNSEV. At Ser-232 the chain carries Phosphoserine. Thr-285 bears the Phosphothreonine mark.

As to quaternary structure, homodimer. Heme b serves as cofactor. As to expression, present in erythrocyte membranes (at protein level). Also expressed in respiratory epithelium.

Its subcellular location is the cell membrane. It localises to the apical cell membrane. The enzyme catalyses Fe(3+)(out) + L-ascorbate(in) = monodehydro-L-ascorbate radical(in) + Fe(2+)(out) + H(+). It carries out the reaction Cu(2+)(out) + L-ascorbate(in) = Cu(+)(out) + monodehydro-L-ascorbate radical(in) + H(+). It catalyses the reaction monodehydro-L-ascorbate radical(out) + L-ascorbate(in) = monodehydro-L-ascorbate radical(in) + L-ascorbate(out). With respect to regulation, activated by chelators like citrate, malate, and oxalate specially at alkaline pH. Its function is as follows. Plasma membrane reductase that uses cytoplasmic ascorbate as an electron donor to reduce extracellular Fe(3+) into Fe(2+). Probably functions in dietary iron absorption at the brush border of duodenal enterocytes by producing Fe(2+), the divalent form of iron that can be transported into enterocytes. It is also able to reduce extracellular monodehydro-L-ascorbate and may be involved in extracellular ascorbate regeneration by erythrocytes in blood. May also act as a ferrireductase in airway epithelial cells. May also function as a cupric transmembrane reductase. This chain is Plasma membrane ascorbate-dependent reductase CYBRD1, found in Homo sapiens (Human).